A 380-amino-acid chain; its full sequence is 3-dehydroquinate synthase (380 aa).

This sequence belongs to the archaeal-type DHQ synthase family.

It catalyses the reaction 2-amino-2,3,7-trideoxy-D-lyxo-hept-6-ulosonate + NAD(+) + H2O = 3-dehydroquinate + NH4(+) + NADH + H(+). Its function is as follows. Catalyzes the oxidative deamination and cyclization of 2-amino-3,7-dideoxy-D-threo-hept-6-ulosonic acid (ADH) to yield 3-dehydroquinate (DHQ), which is fed into the canonical shikimic pathway of aromatic amino acid biosynthesis. This chain is 3-dehydroquinate synthase, found in Methanosarcina acetivorans (strain ATCC 35395 / DSM 2834 / JCM 12185 / C2A).